A 589-amino-acid polypeptide reads, in one-letter code: Ufm1-specific protease (589 aa).

The segment at 1-22 is disordered; it reads MTNSQTVSLIGPTQMAPQSTPP. Active-site residues include Cys-421, Asp-545, and His-547.

Belongs to the peptidase C78 family. As to quaternary structure, interacts with odr-4. As to expression, expressed in head and tail neurons. Expressed in the amphid head neurons ADL, ASI, ASH, ASJ, ASG, ADF, ASK, AWA, AWB, AWC, and in two tail neurons, the phasmid tail neurons PHA and PHB.

It localises to the endoplasmic reticulum membrane. It is found in the cytoplasm. Its subcellular location is the perinuclear region. In terms of biological role, thiol protease which recognizes and hydrolyzes the peptide bond at the C-terminal Gly of ufm-1, a ubiquitin-like modifier protein bound to a number of target proteins. Required, with oct-4, for the localization of a subset of 7 transmembrane domain odorant receptors, including odr-10, to the cilia of olfactory neurons AWA and AWC. Operates in aggregation behavior, and responses to oxygen levels. This Caenorhabditis elegans protein is Ufm1-specific protease.